The chain runs to 411 residues: Glucose-1-phosphate adenylyltransferase (411 aa).

Residues Gly162, 177–178, and Ser195 each bind alpha-D-glucose 1-phosphate; that span reads EK.

It belongs to the bacterial/plant glucose-1-phosphate adenylyltransferase family. As to quaternary structure, homotetramer.

The enzyme catalyses alpha-D-glucose 1-phosphate + ATP + H(+) = ADP-alpha-D-glucose + diphosphate. The protein operates within glycan biosynthesis; glycogen biosynthesis. In terms of biological role, involved in the biosynthesis of ADP-glucose, a building block required for the elongation reactions to produce glycogen. Catalyzes the reaction between ATP and alpha-D-glucose 1-phosphate (G1P) to produce pyrophosphate and ADP-Glc. The chain is Glucose-1-phosphate adenylyltransferase from Thermodesulfovibrio yellowstonii (strain ATCC 51303 / DSM 11347 / YP87).